We begin with the raw amino-acid sequence, 634 residues long: Threonine--tRNA ligase (634 aa).

The segment at 1–142 is editing domain; it reads MQLLLIHSDY…LSRSIRPEGA (142 aa). A catalytic region spans residues 214-513; sequence PHVELMRRLE…TEEGKVPMLP (300 aa). Positions 306, 358, and 482 each coordinate Zn(2+).

It belongs to the class-II aminoacyl-tRNA synthetase family. As to quaternary structure, homodimer. It depends on Zn(2+) as a cofactor.

It is found in the cytoplasm. It catalyses the reaction tRNA(Thr) + L-threonine + ATP = L-threonyl-tRNA(Thr) + AMP + diphosphate + H(+). Catalyzes the attachment of threonine to tRNA(Thr) in a two-step reaction: L-threonine is first activated by ATP to form Thr-AMP and then transferred to the acceptor end of tRNA(Thr). Edits incorrectly charged L-seryl-tRNA(Thr) probably via its editing domain (tested with total bovine tRNA). Activates L-serine, but does not detectably transfer it to tRNA (tested with total bovine tRNA). This is Threonine--tRNA ligase from Methanosarcina mazei (strain ATCC BAA-159 / DSM 3647 / Goe1 / Go1 / JCM 11833 / OCM 88) (Methanosarcina frisia).